The following is a 317-amino-acid chain: Acetyl-coenzyme A carboxylase carboxyl transferase subunit alpha (317 aa).

Positions 41-291 constitute a CoA carboxyltransferase C-terminal domain; the sequence is KVDKLLRSTY…SMALDSALRD (251 aa).

The protein belongs to the AccA family. Acetyl-CoA carboxylase is a heterohexamer composed of biotin carboxyl carrier protein (AccB), biotin carboxylase (AccC) and two subunits each of ACCase subunit alpha (AccA) and ACCase subunit beta (AccD).

Its subcellular location is the cytoplasm. It catalyses the reaction N(6)-carboxybiotinyl-L-lysyl-[protein] + acetyl-CoA = N(6)-biotinyl-L-lysyl-[protein] + malonyl-CoA. It participates in lipid metabolism; malonyl-CoA biosynthesis; malonyl-CoA from acetyl-CoA: step 1/1. Its function is as follows. Component of the acetyl coenzyme A carboxylase (ACC) complex. First, biotin carboxylase catalyzes the carboxylation of biotin on its carrier protein (BCCP) and then the CO(2) group is transferred by the carboxyltransferase to acetyl-CoA to form malonyl-CoA. In Paramagnetospirillum magneticum (strain ATCC 700264 / AMB-1) (Magnetospirillum magneticum), this protein is Acetyl-coenzyme A carboxylase carboxyl transferase subunit alpha.